We begin with the raw amino-acid sequence, 394 residues long: Cysteine desulfurase IscS (394 aa).

Pyridoxal 5'-phosphate-binding positions include 72-73, asparagine 152, glutamine 180, and 200-202; these read GT and SAH. Lysine 203 is modified (N6-(pyridoxal phosphate)lysine). Residue threonine 238 participates in pyridoxal 5'-phosphate binding. Cysteine 326 serves as the catalytic Cysteine persulfide intermediate. Position 326 (cysteine 326) interacts with [2Fe-2S] cluster.

It belongs to the class-V pyridoxal-phosphate-dependent aminotransferase family. NifS/IscS subfamily. In terms of assembly, homodimer. Forms a heterotetramer with IscU, interacts with other sulfur acceptors. It depends on pyridoxal 5'-phosphate as a cofactor.

The protein resides in the cytoplasm. It catalyses the reaction (sulfur carrier)-H + L-cysteine = (sulfur carrier)-SH + L-alanine. Its pathway is cofactor biosynthesis; iron-sulfur cluster biosynthesis. In terms of biological role, master enzyme that delivers sulfur to a number of partners involved in Fe-S cluster assembly, tRNA modification or cofactor biosynthesis. Catalyzes the removal of elemental sulfur atoms from cysteine to produce alanine. Functions as a sulfur delivery protein for Fe-S cluster synthesis onto IscU, an Fe-S scaffold assembly protein, as well as other S acceptor proteins. This is Cysteine desulfurase IscS from Dictyoglomus turgidum (strain DSM 6724 / Z-1310).